A 163-amino-acid polypeptide reads, in one-letter code: Putative 4-hydroxy-4-methyl-2-oxoglutarate aldolase (163 aa).

Substrate contacts are provided by residues 79-82 (GDQL) and Arg-101. An a divalent metal cation-binding site is contributed by Asp-102.

The protein belongs to the class II aldolase/RraA-like family. As to quaternary structure, homotrimer. The cofactor is a divalent metal cation.

It catalyses the reaction 4-hydroxy-4-methyl-2-oxoglutarate = 2 pyruvate. The enzyme catalyses oxaloacetate + H(+) = pyruvate + CO2. Functionally, catalyzes the aldol cleavage of 4-hydroxy-4-methyl-2-oxoglutarate (HMG) into 2 molecules of pyruvate. Also contains a secondary oxaloacetate (OAA) decarboxylase activity due to the common pyruvate enolate transition state formed following C-C bond cleavage in the retro-aldol and decarboxylation reactions. The sequence is that of Putative 4-hydroxy-4-methyl-2-oxoglutarate aldolase from Dechloromonas aromatica (strain RCB).